Here is a 252-residue protein sequence, read N- to C-terminus: 5'-nucleotidase SurE (252 aa).

A divalent metal cation contacts are provided by aspartate 8, aspartate 9, serine 39, and asparagine 91.

This sequence belongs to the SurE nucleotidase family. A divalent metal cation serves as cofactor.

It is found in the cytoplasm. The catalysed reaction is a ribonucleoside 5'-phosphate + H2O = a ribonucleoside + phosphate. In terms of biological role, nucleotidase that shows phosphatase activity on nucleoside 5'-monophosphates. The sequence is that of 5'-nucleotidase SurE from Variovorax paradoxus (strain S110).